The sequence spans 139 residues: Transcription antitermination protein NusB (139 aa).

Belongs to the NusB family.

Involved in transcription antitermination. Required for transcription of ribosomal RNA (rRNA) genes. Binds specifically to the boxA antiterminator sequence of the ribosomal RNA (rrn) operons. The protein is Transcription antitermination protein NusB of Enterobacter sp. (strain 638).